The primary structure comprises 256 residues: MKVEALDKFWADKSRYDLAEKRFYEGPQKVTDRSHYSPLVSEIAKAREHIQNSLEKIDGVTLDDGLNSELAKRLAQLEGEHKELKTQVSLLNELLTATVKRLETQLKLTNGVSKEPEVEAKKPEANDDDDDVDLFGSDSEEEDGEAARIREERLAAYAAKKAKKVQIIAKSNIILDVKPWDDETDLKVMETEIRKITQDGLLWGASKFVPVAFGIQKLSISCVVEDDKVSIDWLTEEIEKLEDFVQSVDIAAFNKI.

3 positions are modified to phosphoserine: S37, S53, and S89. The disordered stretch occupies residues 110 to 146 (NGVSKEPEVEAKKPEANDDDDDVDLFGSDSEEEDGEA). Basic and acidic residues predominate over residues 114 to 125 (KEPEVEAKKPEA). Positions 126–144 (NDDDDDVDLFGSDSEEEDG) are enriched in acidic residues. S137 and S139 each carry phosphoserine.

It belongs to the EF-1-beta/EF-1-delta family. As to quaternary structure, EF-1 is composed of 4 subunits: alpha, beta, delta, and gamma.

EF-1-beta and EF-1-delta stimulate the exchange of GDP bound to EF-1-alpha to GTP. This Drosophila melanogaster (Fruit fly) protein is Probable elongation factor 1-delta (eEF1delta).